The chain runs to 440 residues: MSSNTHHWIARRGTALQGSLAIPGDKSVSHRAVMFAALADGVSQIDGFLEGEDTRSTAAIFAKLGVRIETPSASQRIVHGVGVDGLQPPTGALDCGNAGTGMRLLAGLLAAQRFDSVLVGDESLSKRPMRRVTGPLAQMGARIDTQDDGTPPLRVHGGQALHGIDFVSPVASAQVKSAVLLAGLYAQGETSVTEPHPTRDYSERMLSAFGVDIDFSPGSARLRGGQRLRATDIAVPADFSSAAFFIVAASIVPDSEVVLRAVGLNPRRTGLLAALRLMGADISEENHAEHGGEPVADLRVRYAPLRGAQIPEALVPDMIDEFPALFVAATAASGQTVVTGAAELRVKESDRLAAMATGLRTLGVQVDETPDGATIHGGSIGSGVIESHGDHRIAMAFAIAGQLSSGSVRVNDVANVATSFPGFDTLAQGAGFGLEAAESG.

Residues K26, S27, and R31 each coordinate 3-phosphoshikimate. K26 is a binding site for phosphoenolpyruvate. Residues G99 and R127 each contribute to the phosphoenolpyruvate site. Positions 172, 174, 320, and 347 each coordinate 3-phosphoshikimate. Q174 is a phosphoenolpyruvate binding site. D320 serves as the catalytic Proton acceptor. R351 and R392 together coordinate phosphoenolpyruvate.

It belongs to the EPSP synthase family. As to quaternary structure, monomer.

The protein resides in the cytoplasm. The enzyme catalyses 3-phosphoshikimate + phosphoenolpyruvate = 5-O-(1-carboxyvinyl)-3-phosphoshikimate + phosphate. It functions in the pathway metabolic intermediate biosynthesis; chorismate biosynthesis; chorismate from D-erythrose 4-phosphate and phosphoenolpyruvate: step 6/7. Its function is as follows. Catalyzes the transfer of the enolpyruvyl moiety of phosphoenolpyruvate (PEP) to the 5-hydroxyl of shikimate-3-phosphate (S3P) to produce enolpyruvyl shikimate-3-phosphate and inorganic phosphate. The polypeptide is 3-phosphoshikimate 1-carboxyvinyltransferase (Xanthomonas oryzae pv. oryzae (strain MAFF 311018)).